Reading from the N-terminus, the 112-residue chain is Late expression factor 11 (112 aa).

The protein belongs to the baculoviridae LEF-11 family.

Its function is as follows. Involved in late/very late gene activation. The chain is Late expression factor 11 (LEF-11) from Helicoverpa zea (Corn earworm moth).